A 465-amino-acid chain; its full sequence is tRNA modification GTPase MnmE (465 aa).

(6S)-5-formyl-5,6,7,8-tetrahydrofolate is bound by residues Arg21, Glu85, and Lys124. Residues 220-387 (GVPVAIIGET…LQQRLVAAAH (168 aa)) form the TrmE-type G domain. Asn230 contacts K(+). GTP contacts are provided by residues 230-235 (NAGKST), 249-255 (SDIHGTT), and 274-277 (DTAG). Ser234 contributes to the Mg(2+) binding site. K(+) is bound by residues Ser249, Ile251, and Thr254. Thr255 is a Mg(2+) binding site. Lys465 contacts (6S)-5-formyl-5,6,7,8-tetrahydrofolate.

This sequence belongs to the TRAFAC class TrmE-Era-EngA-EngB-Septin-like GTPase superfamily. TrmE GTPase family. Homodimer. Heterotetramer of two MnmE and two MnmG subunits. Requires K(+) as cofactor.

It localises to the cytoplasm. Its function is as follows. Exhibits a very high intrinsic GTPase hydrolysis rate. Involved in the addition of a carboxymethylaminomethyl (cmnm) group at the wobble position (U34) of certain tRNAs, forming tRNA-cmnm(5)s(2)U34. This is tRNA modification GTPase MnmE from Bacteroides fragilis (strain YCH46).